Here is a 605-residue protein sequence, read N- to C-terminus: UvrABC system protein C (605 aa).

A GIY-YIG domain is found at 15 to 92; the sequence is GLPGCYLMKN…IQKHQPYFNI (78 aa). The 36-residue stretch at 197-232 folds into the UVR domain; it reads GHAKKDLTQRMEKAAADMAYERAGDLRDQIRYIEAT.

This sequence belongs to the UvrC family. In terms of assembly, interacts with UvrB in an incision complex.

The protein resides in the cytoplasm. In terms of biological role, the UvrABC repair system catalyzes the recognition and processing of DNA lesions. UvrC both incises the 5' and 3' sides of the lesion. The N-terminal half is responsible for the 3' incision and the C-terminal half is responsible for the 5' incision. The chain is UvrABC system protein C from Levilactobacillus brevis (strain ATCC 367 / BCRC 12310 / CIP 105137 / JCM 1170 / LMG 11437 / NCIMB 947 / NCTC 947) (Lactobacillus brevis).